The primary structure comprises 478 residues: Hemolysin secretion protein D, chromosomal (478 aa).

The Cytoplasmic segment spans residues 1-59; it reads MKTWLMGFSEFLLRYKLVWSETWKIRKQLDTPVREKDENEFLPAHLELIETPVSRRPRL. The helical; Signal-anchor for type II membrane protein transmembrane segment at 60–80 threads the bilayer; that stretch reads VAYFIMGFLVIAFILSVLGQV. Residues 81 to 478 are Periplasmic-facing; it reads EIVATANGKL…ESVTESLHER (398 aa).

Belongs to the membrane fusion protein (MFP) (TC 8.A.1) family.

It localises to the cell inner membrane. Functionally, involved in the transport of hemolysin A. In Escherichia coli, this protein is Hemolysin secretion protein D, chromosomal (hlyD).